We begin with the raw amino-acid sequence, 430 residues long: Probable transporter SCO4007 (430 aa).

Low complexity predominate over residues 1–17 (MPSSPSSTTPAPTSTPA). Residues 1–26 (MPSSPSSTTPAPTSTPAARREPSGKG) form a disordered region. 11 consecutive transmembrane segments (helical) span residues 34–54 (LFLP…YLAA), 70–90 (AVAW…LFFA), 101–121 (LVAA…ASAG), 126–146 (AGAV…VPLV), 159–179 (VAAV…LGGL), 188–208 (AVFV…AYIL), 244–264 (AGMY…LTEG), 275–295 (GLFG…GGLV), 315–335 (VPLF…AVLV), 362–382 (TAYV…AGPA), and 383–403 (FGHW…VLGW).

This sequence belongs to the major facilitator superfamily.

It localises to the cell membrane. The sequence is that of Probable transporter SCO4007 from Streptomyces coelicolor (strain ATCC BAA-471 / A3(2) / M145).